The following is a 127-amino-acid chain: MAIVGLGTDIVEIERIQAHVARAGDKLAKRVLTEAELAIYTAHSQPSRYLAKRFAAKEAAAKALGTGIGRGVSFQHIHIGNNEDGAPTIHFTEGALTRLQQLKATVGHISIADEKSYAIATVIIESQ.

Positions 9 and 58 each coordinate Mg(2+).

It belongs to the P-Pant transferase superfamily. AcpS family. The cofactor is Mg(2+).

It localises to the cytoplasm. It catalyses the reaction apo-[ACP] + CoA = holo-[ACP] + adenosine 3',5'-bisphosphate + H(+). Transfers the 4'-phosphopantetheine moiety from coenzyme A to a Ser of acyl-carrier-protein. In Shewanella baltica (strain OS185), this protein is Holo-[acyl-carrier-protein] synthase.